Here is a 208-residue protein sequence, read N- to C-terminus: Small ribosomal subunit protein uS3 (208 aa).

One can recognise a KH type-2 domain in the interval 38 to 106 (IRDYIKARLY…EILIDIQEVR (69 aa)).

The protein belongs to the universal ribosomal protein uS3 family. Part of the 30S ribosomal subunit. Forms a tight complex with proteins S10 and S14.

Binds the lower part of the 30S subunit head. Binds mRNA in the 70S ribosome, positioning it for translation. This Syntrophobacter fumaroxidans (strain DSM 10017 / MPOB) protein is Small ribosomal subunit protein uS3.